The primary structure comprises 158 residues: Protein OPG060 (158 aa).

This sequence belongs to the orthopoxvirus OPG058 family.

The polypeptide is Protein OPG060 (OPG060) (Cynomys gunnisoni (Gunnison's prairie dog)).